Here is a 732-residue protein sequence, read N- to C-terminus: Ribosomal RNA large subunit methyltransferase K/L (732 aa).

Positions Met-50 to Leu-162 constitute a THUMP domain. The tract at residues Thr-396–Ala-424 is disordered.

Belongs to the methyltransferase superfamily. RlmKL family.

It localises to the cytoplasm. The catalysed reaction is guanosine(2445) in 23S rRNA + S-adenosyl-L-methionine = N(2)-methylguanosine(2445) in 23S rRNA + S-adenosyl-L-homocysteine + H(+). It catalyses the reaction guanosine(2069) in 23S rRNA + S-adenosyl-L-methionine = N(2)-methylguanosine(2069) in 23S rRNA + S-adenosyl-L-homocysteine + H(+). Its function is as follows. Specifically methylates the guanine in position 2445 (m2G2445) and the guanine in position 2069 (m7G2069) of 23S rRNA. This Chromohalobacter salexigens (strain ATCC BAA-138 / DSM 3043 / CIP 106854 / NCIMB 13768 / 1H11) protein is Ribosomal RNA large subunit methyltransferase K/L.